Consider the following 112-residue polypeptide: Histone H2B (112 aa).

Positions 1–24 (MATPKSSSANRKKGGKKSHRKPKR) are disordered. The span at 10–24 (NRKKGGKKSHRKPKR) shows a compositional bias: basic residues.

Belongs to the histone H2B family. As to quaternary structure, the nucleosome is a histone octamer containing two molecules each of H2A, H2B, H3 and H4 assembled in one H3-H4 heterotetramer and two H2A-H2B heterodimers. The octamer wraps approximately 147 bp of DNA.

The protein resides in the nucleus. Its subcellular location is the chromosome. Core component of nucleosome. Nucleosomes wrap and compact DNA into chromatin, limiting DNA accessibility to the cellular machineries which require DNA as a template. Histones thereby play a central role in transcription regulation, DNA repair, DNA replication and chromosomal stability. DNA accessibility is regulated via a complex set of post-translational modifications of histones, also called histone code, and nucleosome remodeling. The protein is Histone H2B of Trypanosoma cruzi.